Consider the following 445-residue polypeptide: Bifunctional protein GlmU (445 aa).

Residues M1–R218 form a pyrophosphorylase region. Residues L6–G9, K20, Q69, G74–T75, Y96–D98, G134, E147, N162, and N216 each bind UDP-N-acetyl-alpha-D-glucosamine. A Mg(2+)-binding site is contributed by D98. Residue N216 coordinates Mg(2+). Residues K219–N239 are linker. An N-acetyltransferase region spans residues G240–E445. R321 and K339 together coordinate UDP-N-acetyl-alpha-D-glucosamine. The active-site Proton acceptor is H351. UDP-N-acetyl-alpha-D-glucosamine contacts are provided by Y354 and N365. Residues A368, N374–Y375, S393, A411, and R428 each bind acetyl-CoA.

It in the N-terminal section; belongs to the N-acetylglucosamine-1-phosphate uridyltransferase family. This sequence in the C-terminal section; belongs to the transferase hexapeptide repeat family. Homotrimer. Mg(2+) serves as cofactor.

Its subcellular location is the cytoplasm. It carries out the reaction alpha-D-glucosamine 1-phosphate + acetyl-CoA = N-acetyl-alpha-D-glucosamine 1-phosphate + CoA + H(+). The catalysed reaction is N-acetyl-alpha-D-glucosamine 1-phosphate + UTP + H(+) = UDP-N-acetyl-alpha-D-glucosamine + diphosphate. The protein operates within nucleotide-sugar biosynthesis; UDP-N-acetyl-alpha-D-glucosamine biosynthesis; N-acetyl-alpha-D-glucosamine 1-phosphate from alpha-D-glucosamine 6-phosphate (route II): step 2/2. It functions in the pathway nucleotide-sugar biosynthesis; UDP-N-acetyl-alpha-D-glucosamine biosynthesis; UDP-N-acetyl-alpha-D-glucosamine from N-acetyl-alpha-D-glucosamine 1-phosphate: step 1/1. It participates in bacterial outer membrane biogenesis; LPS lipid A biosynthesis. Its function is as follows. Catalyzes the last two sequential reactions in the de novo biosynthetic pathway for UDP-N-acetylglucosamine (UDP-GlcNAc). The C-terminal domain catalyzes the transfer of acetyl group from acetyl coenzyme A to glucosamine-1-phosphate (GlcN-1-P) to produce N-acetylglucosamine-1-phosphate (GlcNAc-1-P), which is converted into UDP-GlcNAc by the transfer of uridine 5-monophosphate (from uridine 5-triphosphate), a reaction catalyzed by the N-terminal domain. This is Bifunctional protein GlmU from Thermotoga sp. (strain RQ2).